The sequence spans 78 residues: Acyl carrier protein (78 aa).

In terms of domain architecture, Carrier spans 2-77 (SEIASRVKAI…DAVSYIEANA (76 aa)). At Ser-37 the chain carries O-(pantetheine 4'-phosphoryl)serine.

This sequence belongs to the acyl carrier protein (ACP) family. 4'-phosphopantetheine is transferred from CoA to a specific serine of apo-ACP by AcpS. This modification is essential for activity because fatty acids are bound in thioester linkage to the sulfhydryl of the prosthetic group.

The protein resides in the cytoplasm. The protein operates within lipid metabolism; fatty acid biosynthesis. Carrier of the growing fatty acid chain in fatty acid biosynthesis. This chain is Acyl carrier protein, found in Phocaeicola vulgatus (strain ATCC 8482 / DSM 1447 / JCM 5826 / CCUG 4940 / NBRC 14291 / NCTC 11154) (Bacteroides vulgatus).